We begin with the raw amino-acid sequence, 154 residues long: 17 kDa surface antigen (154 aa).

Residues 1-19 form the signal peptide; the sequence is MKLLSKIMIIALAASTLQA. Residue cysteine 20 is the site of N-palmitoyl cysteine attachment. A lipid anchor (S-diacylglycerol cysteine) is attached at cysteine 20.

This sequence belongs to the rickettsiale 17 kDa surface antigen family.

It localises to the cell outer membrane. In Rickettsia amblyommatis (Rickettsia amblyommii), this protein is 17 kDa surface antigen (omp).